A 623-amino-acid polypeptide reads, in one-letter code: Chaperone protein DnaK (623 aa).

The segment covering Gln-582–Ser-603 has biased composition (low complexity). The interval Gln-582–Lys-623 is disordered. Over residues Ala-614–Lys-623 the composition is skewed to acidic residues.

Belongs to the heat shock protein 70 family.

Acts as a chaperone. The sequence is that of Chaperone protein DnaK from Methanocella arvoryzae (strain DSM 22066 / NBRC 105507 / MRE50).